A 130-amino-acid polypeptide reads, in one-letter code: Encapsulin nanocompartment cargo protein EncC (130 aa).

Residues Glu31, Glu61, and His64 each coordinate Fe cation. The short motif at 61–64 (EREH) is the Di-iron-binding motif element. Residues 103-130 (EAVGKEGAAPSPADVTPEKRLTVGSLRR) form a disordered region. The segment at 123–130 (LTVGSLRR) is probable targeting peptide.

It belongs to the ferritin-like superfamily.

Its subcellular location is the encapsulin nanocompartment. Functionally, cargo protein of a type 1 encapsulin nanocompartment. May help nucleate Fe atoms in the interior of the encapsulin nanocompartment. Present in about 92 copies/encapsulin nanocompartment. This chain is Encapsulin nanocompartment cargo protein EncC, found in Myxococcus xanthus (strain DK1622).